The sequence spans 61 residues: Beta-defensin 13 (61 aa).

The N-terminal stretch at 1 to 21 (MRLLYLLFAAVMLLFLQAVPA) is a signal peptide. A 1,2-diacyl-sn-glycero-3-phosphate contacts are provided by S24, R40, H44, N51, N53, G54, H58, and K61. Cystine bridges form between C31-C59, C38-C52, and C42-C60.

It belongs to the beta-defensin family. In terms of assembly, monomeric. Forms multimeric, probably including tetrameric, complexes in the presence of phospholipid phosphatidic acid.

Its subcellular location is the secreted. In terms of biological role, exhibits antimicrobial activity against fungi. Antimicrobial activity in a pH-dependent manner against the yeast C.albicans; activity is salt tolerant and retains antifungal activity in NaCl concentrations of 100mM. Permeabilizes C.albicans cell membranes via targeting plasma membrane phospholipid phosphatidic acid. The sequence is that of Beta-defensin 13 from Crocodylus porosus (Saltwater crocodile).